A 247-amino-acid chain; its full sequence is MVDREQLVQKARLAEQAERYDDMAAAMKAVTELNEALSNEERNLLSVAYKNVVGARRSSWRVISSIEQKTSADGNEKKIEMVRAYREKIEKELEAVCQDVLNLLDNFLIKNCSETQYESKVFYLKMKGDYYRYLAEVATGEKRATVVESSEKAYSEAHEISKEHMQPTHPIRLGLALNYSVFYYEIQNAPEQACHLAKTAFDDAIAELDTLNEDSYKDSTLIMQLLRDNLTLWTSDQQDDDGGEGNN.

Belongs to the 14-3-3 family. Homodimer, and heterodimer with other family members.

It localises to the cytoplasm. Its function is as follows. Adapter protein implicated in the regulation of a large spectrum of both general and specialized signaling pathways. Binds to a large number of partners, usually by recognition of a phosphoserine or phosphothreonine motif. Binding generally results in the modulation of the activity of the binding partner. This Xenopus laevis (African clawed frog) protein is 14-3-3 protein gamma-B (ywhag-b).